The primary structure comprises 154 residues: SsrA-binding protein (154 aa).

This sequence belongs to the SmpB family.

Its subcellular location is the cytoplasm. Functionally, required for rescue of stalled ribosomes mediated by trans-translation. Binds to transfer-messenger RNA (tmRNA), required for stable association of tmRNA with ribosomes. tmRNA and SmpB together mimic tRNA shape, replacing the anticodon stem-loop with SmpB. tmRNA is encoded by the ssrA gene; the 2 termini fold to resemble tRNA(Ala) and it encodes a 'tag peptide', a short internal open reading frame. During trans-translation Ala-aminoacylated tmRNA acts like a tRNA, entering the A-site of stalled ribosomes, displacing the stalled mRNA. The ribosome then switches to translate the ORF on the tmRNA; the nascent peptide is terminated with the 'tag peptide' encoded by the tmRNA and targeted for degradation. The ribosome is freed to recommence translation, which seems to be the essential function of trans-translation. This Staphylococcus aureus (strain Mu3 / ATCC 700698) protein is SsrA-binding protein.